Consider the following 498-residue polypeptide: Protein flp (498 aa).

The next 4 membrane-spanning stretches (helical) occupy residues 6-26 (LYFL…IYIT), 389-409 (FNIV…FSAY), 433-453 (LSLC…YLIL), and 471-491 (LALI…LLFL).

The protein localises to the cell membrane. Functionally, its precise function is unknown. Has no penicillin-binding activity and is not involved in methicillin resistance. This Staphylococcus aureus (strain NCTC 8325 / PS 47) protein is Protein flp (flp).